A 325-amino-acid chain; its full sequence is Beta-ketoacyl-[acyl-carrier-protein] synthase III (325 aa).

Residues cysteine 113 and histidine 250 contribute to the active site. The ACP-binding stretch occupies residues 251-255; sequence QANIR. Residue asparagine 280 is part of the active site.

This sequence belongs to the thiolase-like superfamily. FabH family. As to quaternary structure, homodimer.

It is found in the cytoplasm. It carries out the reaction malonyl-[ACP] + acetyl-CoA + H(+) = 3-oxobutanoyl-[ACP] + CO2 + CoA. It functions in the pathway lipid metabolism; fatty acid biosynthesis. In terms of biological role, catalyzes the condensation reaction of fatty acid synthesis by the addition to an acyl acceptor of two carbons from malonyl-ACP. Catalyzes the first condensation reaction which initiates fatty acid synthesis and may therefore play a role in governing the total rate of fatty acid production. Possesses both acetoacetyl-ACP synthase and acetyl transacylase activities. Its substrate specificity determines the biosynthesis of branched-chain and/or straight-chain of fatty acids. The sequence is that of Beta-ketoacyl-[acyl-carrier-protein] synthase III from Streptococcus suis (strain 98HAH33).